The primary structure comprises 517 residues: Maturase K (517 aa).

It belongs to the intron maturase 2 family. MatK subfamily.

Its subcellular location is the plastid. The protein localises to the chloroplast. Usually encoded in the trnK tRNA gene intron. Probably assists in splicing its own and other chloroplast group II introns. In Juncus effusus (Soft rush), this protein is Maturase K.